The chain runs to 389 residues: Alpha-2B adrenergic receptor (389 aa).

Residues 1–25 form a helical membrane-spanning segment; the sequence is AIAAVITFLILFTIFGNALVILAVL. At 26-36 the chain is on the cytoplasmic side; the sequence is TSRSLRAPQNL. A helical membrane pass occupies residues 37 to 62; the sequence is FLVSLAAADILVATLIIPFSLANELL. Topologically, residues 63 to 72 are extracellular; that stretch reads GYWYFRRTWC. Cysteines 72 and 151 form a disulfide. The helical transmembrane segment at 73-95 threads the bilayer; that stretch reads EVYLALDVLFCTSSIVHLCAISL. The Cytoplasmic portion of the chain corresponds to 96-117; sequence DRYWAVTRALEYNTKRTPRRIK. The helical transmembrane segment at 118–140 threads the bilayer; that stretch reads CIILTVWLIAAVISLPPLIYKGD. Residues 141-156 are Extracellular-facing; it reads QGPQPRGRPQCKLNQE. The chain crosses the membrane as a helical span at residues 157 to 180; the sequence is AWYILASSIGSFFAPCLIMILVYL. Over 181–363 the chain is Cytoplasmic; sequence RIYLIAKRSH…LTREKRFTFV (183 aa). 2 disordered regions span residues 194–216 and 233–320; these read PRAKGGPGGGGSKQPHPVPAGAS and EANG…PLQQ. The span at 196 to 205 shows a compositional bias: gly residues; it reads AKGGPGGGGS. The segment covering 255–267 has biased composition (low complexity); the sequence is PALPSSWPALPSS. Acidic residues predominate over residues 280-302; that stretch reads LEEEAEEEEEEEEEEEEGEEECE. Residues 303-320 are compositionally biased toward low complexity; the sequence is PQALPASPASACSPPLQQ. A helical membrane pass occupies residues 364-387; the sequence is LAVVIGVFVLCWFPFFFSYSLGAI. At 388–389 the chain is on the extracellular side; that stretch reads CP.

This sequence belongs to the G-protein coupled receptor 1 family. Adrenergic receptor subfamily. ADRA2B sub-subfamily. In terms of assembly, interacts with RAB26. Interacts with PPP1R9B. Interacts with GGA1, GGA2 and GGA3.

It localises to the cell membrane. Its function is as follows. Alpha-2 adrenergic receptors mediate the catecholamine-induced inhibition of adenylate cyclase through the action of G proteins. The polypeptide is Alpha-2B adrenergic receptor (ADRA2B) (Equus caballus (Horse)).